A 161-amino-acid chain; its full sequence is Effector CFEM5 (161 aa).

The signal sequence occupies residues 1 to 23 (MFSLTKSVLFTSIVAIAAQATTA). Residues 24–126 (VSSPTQTSLP…KVLDAVVASA (103 aa)) form the CFEM domain. Disulfide bonds link cysteine 46-cysteine 78, cysteine 56-cysteine 63, and cysteine 65-cysteine 100. Aspartate 60 serves as a coordination point for heme.

The protein belongs to the RBT5 family. In terms of assembly, interacts with Z.mays LRR5; the interaction is direct. Interacts with Z.mays WAK17 isoform 2; the interaction is direct.

It is found in the membrane. It localises to the secreted. Its function is as follows. Suppresses host programmed cell death during infection by binding to Z.mays WAK17 isoform 2 and Z.mays LRR5, to prevent activation of Z.mays WAK17 isoform 1 and the downstream hypersensitive response. The chain is Effector CFEM5 from Gibberella zeae (strain ATCC MYA-4620 / CBS 123657 / FGSC 9075 / NRRL 31084 / PH-1) (Wheat head blight fungus).